We begin with the raw amino-acid sequence, 419 residues long: UDP-N-acetylglucosamine 1-carboxyvinyltransferase (419 aa).

22–23 (KN) contacts phosphoenolpyruvate. Residue R92 coordinates UDP-N-acetyl-alpha-D-glucosamine. C116 acts as the Proton donor in catalysis. C116 carries the 2-(S-cysteinyl)pyruvic acid O-phosphothioketal modification. UDP-N-acetyl-alpha-D-glucosamine contacts are provided by residues 121 to 125 (RPIDL), D307, and L329.

It belongs to the EPSP synthase family. MurA subfamily.

It is found in the cytoplasm. The catalysed reaction is phosphoenolpyruvate + UDP-N-acetyl-alpha-D-glucosamine = UDP-N-acetyl-3-O-(1-carboxyvinyl)-alpha-D-glucosamine + phosphate. It functions in the pathway cell wall biogenesis; peptidoglycan biosynthesis. Functionally, cell wall formation. Adds enolpyruvyl to UDP-N-acetylglucosamine. This is UDP-N-acetylglucosamine 1-carboxyvinyltransferase from Campylobacter fetus subsp. fetus (strain 82-40).